Here is a 488-residue protein sequence, read N- to C-terminus: ATP synthase subunit beta (488 aa).

164-171 (GGAGVGKT) is an ATP binding site.

The protein belongs to the ATPase alpha/beta chains family. In terms of assembly, F-type ATPases have 2 components, CF(1) - the catalytic core - and CF(0) - the membrane proton channel. CF(1) has five subunits: alpha(3), beta(3), gamma(1), delta(1), epsilon(1). CF(0) has four main subunits: a(1), b(1), b'(1) and c(9-12).

It is found in the cellular thylakoid membrane. It carries out the reaction ATP + H2O + 4 H(+)(in) = ADP + phosphate + 5 H(+)(out). Its function is as follows. Produces ATP from ADP in the presence of a proton gradient across the membrane. The catalytic sites are hosted primarily by the beta subunits. The polypeptide is ATP synthase subunit beta (Prochlorococcus marinus (strain MIT 9211)).